A 154-amino-acid polypeptide reads, in one-letter code: 6,7-dimethyl-8-ribityllumazine synthase (154 aa).

5-amino-6-(D-ribitylamino)uracil contacts are provided by residues Phe-26, 60 to 62 (ALE), and 84 to 86 (CII). Position 89-90 (89-90 (QT)) interacts with (2S)-2-hydroxy-3-oxobutyl phosphate. The Proton donor role is filled by His-92. Asn-117 contributes to the 5-amino-6-(D-ribitylamino)uracil binding site. Arg-131 serves as a coordination point for (2S)-2-hydroxy-3-oxobutyl phosphate.

It belongs to the DMRL synthase family.

The catalysed reaction is (2S)-2-hydroxy-3-oxobutyl phosphate + 5-amino-6-(D-ribitylamino)uracil = 6,7-dimethyl-8-(1-D-ribityl)lumazine + phosphate + 2 H2O + H(+). The protein operates within cofactor biosynthesis; riboflavin biosynthesis; riboflavin from 2-hydroxy-3-oxobutyl phosphate and 5-amino-6-(D-ribitylamino)uracil: step 1/2. Its function is as follows. Catalyzes the formation of 6,7-dimethyl-8-ribityllumazine by condensation of 5-amino-6-(D-ribitylamino)uracil with 3,4-dihydroxy-2-butanone 4-phosphate. This is the penultimate step in the biosynthesis of riboflavin. In Verminephrobacter eiseniae (strain EF01-2), this protein is 6,7-dimethyl-8-ribityllumazine synthase.